The sequence spans 78 residues: MIIPWQQLDPETLDNIIESFVLREGTDYGEQEWSLAQKVEDIRRQLKSGEVVLVWSELHETLNIMPRDQFNAGGHAPY.

This sequence belongs to the UPF0270 family.

The sequence is that of UPF0270 protein PC1_3850 from Pectobacterium carotovorum subsp. carotovorum (strain PC1).